Reading from the N-terminus, the 570-residue chain is Proline--tRNA ligase (570 aa).

Belongs to the class-II aminoacyl-tRNA synthetase family. ProS type 1 subfamily. As to quaternary structure, homodimer.

It localises to the cytoplasm. It catalyses the reaction tRNA(Pro) + L-proline + ATP = L-prolyl-tRNA(Pro) + AMP + diphosphate. Catalyzes the attachment of proline to tRNA(Pro) in a two-step reaction: proline is first activated by ATP to form Pro-AMP and then transferred to the acceptor end of tRNA(Pro). As ProRS can inadvertently accommodate and process non-cognate amino acids such as alanine and cysteine, to avoid such errors it has two additional distinct editing activities against alanine. One activity is designated as 'pretransfer' editing and involves the tRNA(Pro)-independent hydrolysis of activated Ala-AMP. The other activity is designated 'posttransfer' editing and involves deacylation of mischarged Ala-tRNA(Pro). The misacylated Cys-tRNA(Pro) is not edited by ProRS. The sequence is that of Proline--tRNA ligase from Shewanella sp. (strain MR-7).